We begin with the raw amino-acid sequence, 422 residues long: Histidine--tRNA ligase (422 aa).

It belongs to the class-II aminoacyl-tRNA synthetase family. Homodimer.

Its subcellular location is the cytoplasm. It catalyses the reaction tRNA(His) + L-histidine + ATP = L-histidyl-tRNA(His) + AMP + diphosphate + H(+). The sequence is that of Histidine--tRNA ligase from Syntrophomonas wolfei subsp. wolfei (strain DSM 2245B / Goettingen).